The primary structure comprises 604 residues: Putative sodium-dependent multivitamin transporter (604 aa).

Helical transmembrane passes span L4–I24, V48–V68, M78–I98, V134–L154, I160–L180, and L188–L208. N222 and N225 each carry an N-linked (GlcNAc...) asparagine glycan. The next 7 helical transmembrane spans lie at H234 to N254, A273 to L293, L331 to I351, L389 to L409, L413 to V433, G440 to P460, and A511 to L531.

Belongs to the sodium:solute symporter (SSF) (TC 2.A.21) family.

It localises to the cell membrane. This is Putative sodium-dependent multivitamin transporter from Drosophila melanogaster (Fruit fly).